We begin with the raw amino-acid sequence, 369 residues long: MTTHAAAPSTRVLIVDDSAAARAMFKVIVESDPALQVMAAVPDAFAAARAMRTELPDVILLDLELPGMDGLTFLRKIMQQHPIPVVVCSSHVGAGTEAMVSALELGAREVISKPAARNDLERQEASIRICDAIRAATETTRRRSQPEPRPLAPGPKLTADEILPARPPRPVPETMPVVCIGASTGGTEALRDVLTALPASAPPIVIVQHMPRGFTAAFARRLDSLCAIEVLEAEDEMQVMPGRAIIAQGDRHLLLRRRNQGYRVSVLDGAYVCRHRPSVDVLFRSAAQEAGGNALGVIMTGMGDDGARCMAEMRAAGAETIAQNEESCVVYGMPREAVAHGGVGKVEPLDRLAARIMEFGRRHTERTVR.

The Response regulatory domain maps to 11-128 (RVLIVDDSAA…DLERQEASIR (118 aa)). Residue Asp62 is modified to 4-aspartylphosphate. The interval 136–168 (ATETTRRRSQPEPRPLAPGPKLTADEILPARPP) is disordered. Residues 170-358 (PVPETMPVVC…LDRLAARIME (189 aa)) enclose the CheB-type methylesterase domain. Catalysis depends on residues Ser183, His209, and Asp305.

It belongs to the CheB family. Phosphorylated by CheA. Phosphorylation of the N-terminal regulatory domain activates the methylesterase activity.

It localises to the cytoplasm. The enzyme catalyses [protein]-L-glutamate 5-O-methyl ester + H2O = L-glutamyl-[protein] + methanol + H(+). It catalyses the reaction L-glutaminyl-[protein] + H2O = L-glutamyl-[protein] + NH4(+). In terms of biological role, involved in chemotaxis. Part of a chemotaxis signal transduction system that modulates chemotaxis in response to various stimuli. Catalyzes the demethylation of specific methylglutamate residues introduced into the chemoreceptors (methyl-accepting chemotaxis proteins or MCP) by CheR. Also mediates the irreversible deamidation of specific glutamine residues to glutamic acid. The protein is Protein-glutamate methylesterase/protein-glutamine glutaminase 1 of Cereibacter sphaeroides (strain ATCC 17023 / DSM 158 / JCM 6121 / CCUG 31486 / LMG 2827 / NBRC 12203 / NCIMB 8253 / ATH 2.4.1.) (Rhodobacter sphaeroides).